The sequence spans 267 residues: Nus factor SuhB (267 aa).

Mg(2+)-binding residues include Glu67, Asp84, and Leu86. Glu67 contributes to the substrate binding site. Substrate-binding positions include 86-89 (LDGT), Arg183, and Asp212.

The protein belongs to the inositol monophosphatase superfamily. As to quaternary structure, homodimer. The rRNA transcription and antitermination complex (rrnTAC) consists of RNA polymerase (RNAP), NusA, NusB, NusE (rpsJ), NusG, SubB, ribosomal protein S4, DNA and precursor rRNA; S4 is more flexible than other subunits. Requires Mg(2+) as cofactor.

The protein resides in the cytoplasm. The enzyme catalyses a myo-inositol phosphate + H2O = myo-inositol + phosphate. Part of the processive rRNA transcription and antitermination complex (rrnTAC). The complex forms an RNA-chaperone ring around the RNA exit tunnel of RNA polymerase (RNAP). It supports rapid transcription and antitermination of rRNA operons, cotranscriptional rRNA folding, and annealing of distal rRNA regions to allow correct ribosome biogenesis. This subunit may play a central role in organizing the structure. This is Nus factor SuhB from Vibrio cholerae serotype O1 (strain ATCC 39315 / El Tor Inaba N16961).